Consider the following 362-residue polypeptide: Peptide chain release factor 1 (362 aa).

At glutamine 237 the chain carries N5-methylglutamine.

This sequence belongs to the prokaryotic/mitochondrial release factor family. Post-translationally, methylated by PrmC. Methylation increases the termination efficiency of RF1.

It is found in the cytoplasm. In terms of biological role, peptide chain release factor 1 directs the termination of translation in response to the peptide chain termination codons UAG and UAA. The chain is Peptide chain release factor 1 from Legionella pneumophila (strain Paris).